Reading from the N-terminus, the 90-residue chain is Small ribosomal subunit protein bS6 (90 aa).

Lys-33 is covalently cross-linked (Isoglutamyl lysine isopeptide (Lys-Gln) (interchain with Q-Cter in protein Pup)).

It belongs to the bacterial ribosomal protein bS6 family.

Functionally, binds together with bS18 to 16S ribosomal RNA. In Mycolicibacterium smegmatis (strain ATCC 700084 / mc(2)155) (Mycobacterium smegmatis), this protein is Small ribosomal subunit protein bS6 (rpsF).